The chain runs to 540 residues: Glucose-6-phosphate isomerase (540 aa).

Residue glutamate 350 is the Proton donor of the active site. Residues histidine 381 and lysine 503 contribute to the active site.

Belongs to the GPI family.

The protein resides in the cytoplasm. The catalysed reaction is alpha-D-glucose 6-phosphate = beta-D-fructose 6-phosphate. It participates in carbohydrate biosynthesis; gluconeogenesis. It functions in the pathway carbohydrate degradation; glycolysis; D-glyceraldehyde 3-phosphate and glycerone phosphate from D-glucose: step 2/4. Its function is as follows. Catalyzes the reversible isomerization of glucose-6-phosphate to fructose-6-phosphate. The protein is Glucose-6-phosphate isomerase of Burkholderia ambifaria (strain MC40-6).